Reading from the N-terminus, the 267-residue chain is Ribosomal RNA small subunit methyltransferase A (267 aa).

S-adenosyl-L-methionine-binding residues include asparagine 12, isoleucine 14, glycine 39, glutamate 60, aspartate 84, and asparagine 110.

Belongs to the class I-like SAM-binding methyltransferase superfamily. rRNA adenine N(6)-methyltransferase family. RsmA subfamily.

Its subcellular location is the cytoplasm. It catalyses the reaction adenosine(1518)/adenosine(1519) in 16S rRNA + 4 S-adenosyl-L-methionine = N(6)-dimethyladenosine(1518)/N(6)-dimethyladenosine(1519) in 16S rRNA + 4 S-adenosyl-L-homocysteine + 4 H(+). In terms of biological role, specifically dimethylates two adjacent adenosines (A1518 and A1519) in the loop of a conserved hairpin near the 3'-end of 16S rRNA in the 30S particle. May play a critical role in biogenesis of 30S subunits. This chain is Ribosomal RNA small subunit methyltransferase A, found in Mesoplasma florum (strain ATCC 33453 / NBRC 100688 / NCTC 11704 / L1) (Acholeplasma florum).